The chain runs to 664 residues: Prelamin-A/C (664 aa).

Position 1 is an N-acetylmethionine (Met-1). Residues 1-24 form a disordered region; that stretch reads METPSQRRATRSGAQASSTPLSPT. The tract at residues 1–33 is head; sequence METPSQRRATRSGAQASSTPLSPTRITRLQEKE. Residues 1-130 form an interaction with MLIP region; the sequence is METPSQRRAT…TKKEGDLMAA (130 aa). At Thr-3 the chain carries Phosphothreonine. Ser-5 is modified (phosphoserine). Thr-10 bears the Phosphothreonine mark. Ser-12 and Ser-18 each carry phosphoserine. Thr-19 carries the post-translational modification Phosphothreonine. Phosphoserine is present on Ser-22. Residues 31–387 enclose the IF rod domain; sequence EKEDLQELND…KLLEGEEERL (357 aa). Lys-32 is modified (N6-acetyllysine; alternate). An N6-succinyllysine; alternate modification is found at Lys-32. Residue Lys-32 forms a Glycyl lysine isopeptide (Lys-Gly) (interchain with G-Cter in SUMO2); alternate linkage. The segment at 34–70 is coil 1A; the sequence is DLQELNDRLAVYIDRVRSLETENAGLRLRITESEEVV. A phosphoserine mark is found at Ser-51, Ser-66, and Ser-71. The interval 71-80 is linker 1; sequence SREVSGIKSA. Lys-78 and Lys-97 each carry N6-acetyllysine. The coil 1B stretch occupies residues 81–218; that stretch reads YEAELGDARK…NIYSEELRET (138 aa). Lys-97 participates in a covalent cross-link: Glycyl lysine isopeptide (Lys-Gly) (interchain with G-Cter in SUMO2). Ser-107 is modified (phosphoserine). N6-acetyllysine is present on residues Lys-108, Lys-114, Lys-123, Lys-135, Lys-144, and Lys-155. Lys-171 carries the N6-acetyllysine; alternate modification. Lys-171 is modified (N6-succinyllysine; alternate). Residue Lys-171 forms a Glycyl lysine isopeptide (Lys-Gly) (interchain with G-Cter in SUMO2); alternate linkage. N6-acetyllysine is present on residues Lys-180, Lys-201, and Lys-208. Residue Lys-201 forms a Glycyl lysine isopeptide (Lys-Gly) (interchain with G-Cter in SUMO2); alternate linkage. A Glycyl lysine isopeptide (Lys-Gly) (interchain with G-Cter in SUMO); alternate cross-link involves residue Lys-201. Lys-208 is covalently cross-linked (Glycyl lysine isopeptide (Lys-Gly) (interchain with G-Cter in SUMO2)). Phosphoserine is present on Ser-212. Glycyl lysine isopeptide (Lys-Gly) (interchain with G-Cter in SUMO2) cross-links involve residues Lys-219 and Lys-233. The tract at residues 219–242 is linker 2; it reads KRRHETRLVEIDNGKQREFESRLA. Lys-233, Lys-260, Lys-265, and Lys-270 each carry N6-acetyllysine. The tract at residues 243–383 is coil 2; the sequence is DALQDLRAQH…HAYRKLLEGE (141 aa). A Glycyl lysine isopeptide (Lys-Gly) (interchain with G-Cter in SUMO2); alternate cross-link involves residue Lys-260. Lys-270 participates in a covalent cross-link: Glycyl lysine isopeptide (Lys-Gly) (interchain with G-Cter in SUMO2); alternate. Residues Ser-277, Ser-282, Ser-301, and Ser-307 each carry the phosphoserine modification. Lys-311 is covalently cross-linked (Glycyl lysine isopeptide (Lys-Gly) (interchain with G-Cter in SUMO2); alternate). N6-acetyllysine occurs at positions 311, 316, and 341. Residues Lys-366 and Lys-378 each participate in a glycyl lysine isopeptide (Lys-Gly) (interchain with G-Cter in SUMO2) cross-link. Residues 384–442 are disordered; sequence EERLRLSPSPTSQRSRGRASSHSSQTQSGGSVTKKRKLESSESRSSFSQHARTSGRVAV. A tail region spans residues 384–664; that stretch reads EERLRLSPSP…TQSPQNCSIM (281 aa). 9 positions are modified to phosphoserine: Ser-390, Ser-392, Ser-395, Ser-398, Ser-403, Ser-404, Ser-406, Ser-407, and Ser-414. The span at 403-414 shows a compositional bias: low complexity; that stretch reads SSHSSQTQSGGS. A Phosphothreonine modification is found at Thr-416. Position 417 is an N6-acetyllysine (Lys-417). Glycyl lysine isopeptide (Lys-Gly) (interchain with G-Cter in SUMO2) cross-links involve residues Lys-417 and Lys-420. Residues 417–422 carry the Nuclear localization signal motif; the sequence is KKRKLE. A phosphoserine mark is found at Ser-423, Ser-426, Ser-429, and Ser-431. One can recognise an LTD domain in the interval 428 to 545; that stretch reads SSFSQHARTS…EEVAMRKLVR (118 aa). Residue Lys-450 forms a Glycyl lysine isopeptide (Lys-Gly) (interchain with G-Cter in SUMO2); alternate linkage. Residues Lys-450 and Lys-457 each carry the N6-acetyllysine modification. Ser-458 and Ser-463 each carry phosphoserine. Glycyl lysine isopeptide (Lys-Gly) (interchain with G-Cter in SUMO2) cross-links involve residues Lys-470 and Lys-486. At Lys-486 the chain carries N6-acetyllysine. Phosphothreonine is present on residues Thr-496 and Thr-505. 2 positions are modified to phosphoserine: Ser-533 and Ser-546. Thr-548 bears the Phosphothreonine mark. Residues 555–577 form a disordered region; sequence DEDGDDLLHHHHGSHGSSSGDPA. Residues Ser-568 and Ser-571 each carry the phosphoserine modification. A Glycyl lysine isopeptide (Lys-Gly) (interchain with G-Cter in SUMO2); alternate cross-link involves residue Lys-597. Lys-597 is covalently cross-linked (Glycyl lysine isopeptide (Lys-Gly) (interchain with G-Cter in SUMO1); alternate). Residues 598-620 form a disordered region; sequence ASASSSGAQVGGSISSGSSASSV. Residues Ser-612, Ser-613, Ser-616, and Ser-619 each carry the phosphoserine modification. 2 O-linked (GlcNAc) serine glycosylation sites follow: Ser-625 and Ser-628. Ser-628, Ser-632, and Ser-636 each carry phosphoserine. Positions 647-661 are cleaved as a propeptide — removed in Lamin-A/C form; that stretch reads LLGNSRPRTQSPQNC. Position 661 is a cysteine methyl ester (Cys-661). Residue Cys-661 is the site of S-farnesyl cysteine attachment. Positions 662–664 are cleaved as a propeptide — removed in Prelamin-A/C form and in Lamin-A/C form; sequence SIM.

This sequence belongs to the intermediate filament family. As to quaternary structure, homodimer of lamin A and lamin C. Lamin dimers then assemble into dimeric head-to-tail polymers. Ultimately, two head-to-tail polymers assemble laterally into a protofilament with a uniformly shaped rod of 3.5 nm in diameter. Interacts with lamin-associated polypeptides IA, IB and TMPO-alpha, RB1 and with emerin. Interacts with SREBF1, SREBF2, SUN2 and TMEM43. Interacts with TMEM201. Proteolytically processed isoform A interacts with NARF. Interacts with SUN1. Interacts with MLIP. Interacts with DMPK; may regulate nuclear envelope stability. Interacts with SUV39H1; the interaction increases stability of SUV39H1. Interacts with SYNE2. Interacts with ITSN1 isoform 2. Interacts with IFFO1; enables the formation of an interior nucleoskeleton that is recruited to DNA double-strand breaks. In terms of assembly, interacts with EMD. Interacts (via C-terminus) with LEMD2 (via N-terminus) (in vitro). In terms of processing, proteolytic cleavage of the C-terminal of 18 residues of prelamin-A/C results in the production of lamin-A/C. The prelamin-A/C maturation pathway includes farnesylation of CAAX motif by protein farnesyltransferase (FNTA and FNTB), removal of the last three amino acids (-AAX) by RCE1/FACE2 and/or ZMPSTE24, methylation of the C-terminal cysteine by ICMT and endoproteolytic removal of the last 15 C-terminal amino acids by ZMPSTE24. Proteolytic cleavage requires prior farnesylation and methylation, and absence of these blocks cleavage. Farnesylation of prelamin-A/C facilitates nuclear envelope targeting. Post-translationally, phosphorylation plays a key role in lamin organization, subcellular localization and nuclear envelope disintegration. Phosphorylation by CDK1 at Ser-22 and Ser-392 at the onset of mitosis drives lamin disassembly and nuclear envelope breakdown. Phosphorylation at Ser-22 and Ser-392 during interphase promotes localization to the nucleoplasm and regulates lamina assembly. Phosphorylation at Ser-22, Ser-392 and Ser-628 during interphase causes redistribution between the nucleus and the cytoplasm. Phosphorylation at Ser-22 by CDK1 regulates matrix stiffness. Phosphorylation status of Ser-22 determines its localization between double-strand break (DSB) sites and the nuclear matrix. Phosphorylated by ATR at Ser-282 in response to DNA damage, leading to lamin disassembly and nuclear envelope rupture. Phosphorylation also regulates stability in micronuclei arising from genome instability: phosphorylation at Ser-395 by ATR in response to genome instability and double-stranded DNA breaks primes LMNA for subsequent phosphorylation at Ser-392 by CDK1 and micronuclei envelope rupture. The rupture of micronuclear envelope triggers the cGAS-STING pathway thereby activating the type I interferon response and innate immunity. In terms of processing, acetylation by KAT8 is required for nuclear architecture. Sumoylation is necessary for the localization to the nuclear envelope.

It is found in the nucleus lamina. It localises to the nucleus envelope. Its subcellular location is the nucleus. The protein localises to the nucleoplasm. The protein resides in the nucleus matrix. Lamins are intermediate filament proteins that assemble into a filamentous meshwork, and which constitute the major components of the nuclear lamina, a fibrous layer on the nucleoplasmic side of the inner nuclear membrane. Lamins provide a framework for the nuclear envelope, bridging the nuclear envelope and chromatin, thereby playing an important role in nuclear assembly, chromatin organization, nuclear membrane and telomere dynamics. Lamin A and C also regulate matrix stiffness by conferring nuclear mechanical properties. The structural integrity of the lamina is strictly controlled by the cell cycle, as seen by the disintegration and formation of the nuclear envelope in prophase and telophase, respectively. Lamin A and C are present in equal amounts in the lamina of mammals. Also invoved in DNA repair: recruited by DNA repair proteins XRCC4 and IFFO1 to the DNA double-strand breaks (DSBs) to prevent chromosome translocation by immobilizing broken DNA ends. Required for normal development of peripheral nervous system and skeletal muscle and for muscle satellite cell proliferation. Required for osteoblastogenesis and bone formation. Also prevents fat infiltration of muscle and bone marrow, helping to maintain the volume and strength of skeletal muscle and bone. Required for cardiac homeostasis. Its function is as follows. Prelamin-A/C can accelerate smooth muscle cell senescence. It acts to disrupt mitosis and induce DNA damage in vascular smooth muscle cells (VSMCs), leading to mitotic failure, genomic instability, and premature senescence. This chain is Prelamin-A/C (LMNA), found in Sus scrofa (Pig).